Consider the following 349-residue polypeptide: Core protein VP7 (349 aa).

An N-linked (GlcNAc...) asparagine; by host glycan is attached at N287.

The protein belongs to the orbivirus VP7 family. Homotrimer that assemble in a complex of 260 capsomers on an inner scaffold composed of VP3.

The protein resides in the virion. Its function is as follows. The VP7 protein is one of the five proteins (with VP1, VP3, VP4, and VP6) which form the inner capsid of the virus. The sequence is that of Core protein VP7 (Segment-7) from Antilocapra americana (Pronghorn).